Reading from the N-terminus, the 334-residue chain is Spermidine synthase 1 (334 aa).

The span at 1-16 shows a compositional bias: basic and acidic residues; it reads MDAKETSATDLKRPRE. The segment at 1-35 is disordered; sequence MDAKETSATDLKRPREEDDNGGAATMETENGDQKK. Residues 45 to 282 enclose the PABS domain; sequence PGWFSEMSPM…GVIGFMLCST (238 aa). Q76 serves as a coordination point for S-adenosyl 3-(methylsulfanyl)propylamine. Y106 serves as a coordination point for putrescine. Residues Q107, D131, E151, 182 to 183, and D201 each bind S-adenosyl 3-(methylsulfanyl)propylamine; that span reads DG. D201 (proton acceptor) is an active-site residue. Putrescine is bound by residues 201–204 and Y270; that span reads DSSD.

The protein belongs to the spermidine/spermine synthase family. In terms of assembly, homotetramer and heterodimer. Component of a multiprotein complex. Interacts with SPMS and SPDSYN2.

The catalysed reaction is S-adenosyl 3-(methylsulfanyl)propylamine + putrescine = S-methyl-5'-thioadenosine + spermidine + H(+). The protein operates within amine and polyamine biosynthesis; spermidine biosynthesis; spermidine from putrescine: step 1/1. This Arabidopsis thaliana (Mouse-ear cress) protein is Spermidine synthase 1 (SPDSYN1).